The primary structure comprises 676 residues: Potassium voltage-gated channel subfamily KQT member 1 (676 aa).

Disordered stretches follow at residues 1-28 (MAAASSPPRAERKRWGWGRLPGARRGSA) and 62-84 (APPASPAAPAAPPVASDLGPRPP). The Cytoplasmic segment spans residues 1-120 (MAAASSPPRA…YNFLERPTGW (120 aa)). A Phosphoserine; by PKA modification is found at Ser-27. Residues 62–73 (APPASPAAPAAP) are compositionally biased toward pro residues. Residues 121 to 142 (KCFVYHFAVFLIVLVCLIFSVL) traverse the membrane as a helical segment. Over 143–153 (STIEQYAALAT) the chain is Extracellular. Residues 154 to 176 (GTLFWMEIVLVVFFGTEYVVRLW) traverse the membrane as a helical segment. Residues 177 to 192 (SAGCRSKYVGLWGRLR) are Cytoplasmic-facing. Residues 193–218 (FARKPISIIDLIVVVASMVVLCVGSK) form a helical membrane-spanning segment. Residues 219–226 (GQVFATSA) are Extracellular-facing. The chain crosses the membrane as a helical; Voltage-sensor span at residues 227 to 242 (IRGIRFLQILRMLHVD). The tract at residues 238–246 (MLHVDRQGG) is interaction with KCNE3. Residues 243-260 (RQGGTWRLLGSVVFIHRQ) lie on the Cytoplasmic side of the membrane. Gln-244 contacts a 1,2-diacyl-sn-glycero-3-phospho-(1D-myo-inositol-4,5-bisphosphate). Residues 261 to 283 (ELITTLYIGFLGLIFSSYFVYLA) form a helical membrane-spanning segment. The Extracellular portion of the chain corresponds to 284-299 (EKDAVNESGRVEFGSY). Asn-289 carries N-linked (GlcNAc...) asparagine glycosylation. An intramembrane region (pore-forming) is located at residues 300–320 (ADALWWGVVTVTTIGYGDKVP). Over 321–322 (QT) the chain is Extracellular. The helical transmembrane segment at 323-348 (WVGKTIASCFSVFAISFFALPAGILG) threads the bilayer. Residues 349-676 (SGFALKVQQK…VPRRGPDEGS (328 aa)) are Cytoplasmic-facing. Positions 370-382 (AAASLIQTAWRCY) are interaction with CALM. Ser-407 and Ser-409 each carry phosphoserine. The tract at residues 515–529 (KVIRRMQYFVAKKKF) is interaction with CALM; calcium-dependent. The interval 535–572 (PYDVRDVIEQYSQGHLNLMVRIKELQRRLDQSIGKPSL) is interaction with KCNE1 C-terminus. The stretch at 585–621 (SNTIGARLNRVEDKVTQLDQRLALITDMLHQLLSLHG) forms a coiled coil. Residues 588 to 616 (IGARLNRVEDKVTQLDQRLALITDMLHQL) form an interaction with AKAP9 region. The segment at 589 to 620 (GARLNRVEDKVTQLDQRLALITDMLHQLLSLH) is C-terminal assembly domain (tetramerization). The interval 620–676 (HGGSTPGSGGPPREGGAHITQPCGSGGSVDPELFLPSNTLPTYEQLTVPRRGPDEGS) is disordered. Positions 623–632 (STPGSGGPPR) are enriched in gly residues. A compositionally biased stretch (polar residues) spans 655–664 (PSNTLPTYEQ).

The protein belongs to the potassium channel family. KQT (TC 1.A.1.15) subfamily. Kv7.1/KCNQ1 sub-subfamily. In terms of assembly, tetramer. Heterotetramer with KCNE1; targets to the membrane raft. Interacts (via C-terminus) with calmodulin; forms a heterooctameric structure (with 4:4 KCNQ1:CALM stoichiometry); the interaction is calcium-independent, constitutive, participates in the proper assembly of a functional channel and also acts a calcium sensor. KCNQ1 channels interact more strongly with Ca(2+)-CALM than with apoCALM. Interacts with AKAP9; targets protein kinase A (PKA) catalytic and regulatory subunits and protein phosphatase 1 (PP1) to the KCNQ1-KCNE1 complex, allowing PKA-mediated phosphorylation and increase of delayed rectifier potassium channel activity. Interacts with KCNE2; forms a heterooligomer complex that targets to the membrane raft and leading to currents with an apparently instantaneous activation, a rapid deactivation process and a linear current-voltage relationship and decreases the amplitude of the outward current. Interacts with AP2M1; mediates estrogen-induced internalization via clathrin-coated vesicles. Interacts with NEDD4L; promotes internalization and decreases I(Ks) currents. Interacts with USP2; counteracts the NEDD4L-specific down-regulation of I(Ks) and restore plasma membrane localization. Heterotetramer with KCNQ5; has a voltage-gated potassium channel activity. Interacts with KCNE3; four KCNE3 molecules are bound to one KCNQ1 tetramer (4:4 KCNQ1:KCNE3 stoichiometry); alters membrane raft localization; affects KCNQ1 structure and gating properties. Interacts with KCNE4; impairs KCNQ1 localization in lipid rafts and inhibits voltage-gated potassium channel activity. Interacts with KCNE5; impairs KCNQ1 localization in lipid rafts and only conducts current upon strong and continued depolarization. Interacts with SLC5A3; forms coregulatory channel-transporter complexes that modulate Na(+)-coupled myo-inositol influx through the transporter. Post-translationally, phosphorylation at Ser-27 by PKA; increases delayed rectifier potassium channel activity of the KCNQ1-KCNE1 complex through a macromolecular complex that includes PKA, PP1, and the targeting protein AKAP9. In terms of processing, ubiquitinated by NEDD4L; promotes internalization. The ubiquitinylated form is internalized through a clathrin-mediated endocytosis by interacting with AP2M1 and is recycled back to the cell membrane via RAB4A and RAB11A. Deubiquitinated by USP2; counteracts the NEDD4L-specific down-regulation of I(Ks) and restores the membrane localization. As to expression, abundantly expressed in heart, pancreas, prostate, kidney, small intestine and peripheral blood leukocytes. Less abundant in placenta, lung, spleen, colon, thymus, testis and ovaries.

It is found in the cell membrane. Its subcellular location is the cytoplasmic vesicle membrane. The protein resides in the early endosome. The protein localises to the membrane raft. It localises to the endoplasmic reticulum. It is found in the basolateral cell membrane. Its subcellular location is the apical cell membrane. The enzyme catalyses K(+)(in) = K(+)(out). Its activity is regulated as follows. PIP2 molecule is essential to activate KCNQ channels by inducing the coupling of the voltage-sensing domain (VSD) and the pore-forming domain (PD). Upon channel activation, PIP2 disrupts the VSD-calmodulin/CALM interactions, causing the release of CALM from the VSD which triggers the opening of the gate. Calcium potentiates KCNQ1 channel current through calcium-bound CALM. Calcium-bound CALM competes with PIP2 to stabilize the channel open state. In terms of biological role, pore-forming subunit of the voltage-gated potassium (Kv) channel involved in the regulation of cardiomyocyte excitability and important in normal development and functions of myocardium, inner ear, stomach and colon. Associates with KCNE beta subunits that modulates current kinetics. Induces a voltage-dependent current by rapidly activating and slowly deactivating potassium-selective outward current. Also promotes a delayed voltage activated potassium current showing outward rectification characteristic. During beta-adrenergic receptor stimulation, participates in cardiac repolarization by associating with KCNE1 to form the I(Ks) cardiac potassium current that increases the amplitude and slows down the activation kinetics of outward potassium current I(Ks). Muscarinic agonist oxotremorine-M strongly suppresses KCNQ1/KCNE1 current. When associated with KCNE3, forms the potassium channel that is important for cyclic AMP-stimulated intestinal secretion of chloride ions. This interaction with KCNE3 is reduced by 17beta-estradiol, resulting in the reduction of currents. During conditions of increased substrate load, maintains the driving force for proximal tubular and intestinal sodium ions absorption, gastric acid secretion, and cAMP-induced jejunal chloride ions secretion. Allows the provision of potassium ions to the luminal membrane of the secretory canaliculus in the resting state as well as during stimulated acid secretion. When associated with KCNE2, forms a heterooligomer complex leading to currents with an apparently instantaneous activation, a rapid deactivation process and a linear current-voltage relationship and decreases the amplitude of the outward current. When associated with KCNE4, inhibits voltage-gated potassium channel activity. When associated with KCNE5, this complex only conducts current upon strong and continued depolarization. Also forms a heterotetramer with KCNQ5; has a voltage-gated potassium channel activity. Binds with phosphatidylinositol 4,5-bisphosphate. KCNQ1-KCNE2 channel associates with Na(+)-coupled myo-inositol symporter in the apical membrane of choroid plexus epithelium and regulates the myo-inositol gradient between blood and cerebrospinal fluid with an impact on neuron excitability. Functionally, non-functional alone but modulatory when coexpressed with the full-length isoform 1. The chain is Potassium voltage-gated channel subfamily KQT member 1 from Homo sapiens (Human).